Consider the following 513-residue polypeptide: ATP synthase subunit alpha (513 aa).

An ATP-binding site is contributed by 169–176 (GDRQTGKT).

The protein belongs to the ATPase alpha/beta chains family. As to quaternary structure, F-type ATPases have 2 components, CF(1) - the catalytic core - and CF(0) - the membrane proton channel. CF(1) has five subunits: alpha(3), beta(3), gamma(1), delta(1), epsilon(1). CF(0) has three main subunits: a(1), b(2) and c(9-12). The alpha and beta chains form an alternating ring which encloses part of the gamma chain. CF(1) is attached to CF(0) by a central stalk formed by the gamma and epsilon chains, while a peripheral stalk is formed by the delta and b chains.

The protein resides in the cell inner membrane. The catalysed reaction is ATP + H2O + 4 H(+)(in) = ADP + phosphate + 5 H(+)(out). Its function is as follows. Produces ATP from ADP in the presence of a proton gradient across the membrane. The alpha chain is a regulatory subunit. This Haemophilus influenzae (strain PittGG) protein is ATP synthase subunit alpha.